Consider the following 992-residue polypeptide: UPF0182 protein RHA1_ro06389 (992 aa).

A run of 7 helical transmembrane segments spans residues 18-38 (VLLVLALVVAALLLVGPRLIS), 63-83 (LLLFLVVGVVVGGIVWLALLL), 114-134 (LFGLAIPIAVGLLAGLIAQSS), 174-194 (WLFVAVLLAFFASLVTHYIFG), 211-231 (VQLAVLAGTFILLKAVAYWFD), 260-280 (KLILLAIAVICAGAFFAAIFL), and 288-308 (MATALLVLSSILVGAVWPLVV). Residues 904 to 948 (TGSVATAPSAEEGTPPETGTTPPVDQGAAPAPTAPATPPSGTDVS) are disordered. Residues 908–934 (ATAPSAEEGTPPETGTTPPVDQGAAPA) show a composition bias toward low complexity.

Belongs to the UPF0182 family.

Its subcellular location is the cell membrane. The sequence is that of UPF0182 protein RHA1_ro06389 from Rhodococcus jostii (strain RHA1).